A 692-amino-acid polypeptide reads, in one-letter code: Elongation factor G (692 aa).

Residues Glu8–Val282 enclose the tr-type G domain. GTP-binding positions include Ala17 to Thr24, Asp81 to His85, and Asn135 to Asp138.

Belongs to the TRAFAC class translation factor GTPase superfamily. Classic translation factor GTPase family. EF-G/EF-2 subfamily.

The protein resides in the cytoplasm. Its function is as follows. Catalyzes the GTP-dependent ribosomal translocation step during translation elongation. During this step, the ribosome changes from the pre-translocational (PRE) to the post-translocational (POST) state as the newly formed A-site-bound peptidyl-tRNA and P-site-bound deacylated tRNA move to the P and E sites, respectively. Catalyzes the coordinated movement of the two tRNA molecules, the mRNA and conformational changes in the ribosome. The protein is Elongation factor G of Anoxybacillus flavithermus (strain DSM 21510 / WK1).